We begin with the raw amino-acid sequence, 308 residues long: Ribosomal RNA large subunit methyltransferase F (308 aa).

This sequence belongs to the methyltransferase superfamily. METTL16/RlmF family.

The protein resides in the cytoplasm. It catalyses the reaction adenosine(1618) in 23S rRNA + S-adenosyl-L-methionine = N(6)-methyladenosine(1618) in 23S rRNA + S-adenosyl-L-homocysteine + H(+). Functionally, specifically methylates the adenine in position 1618 of 23S rRNA. The chain is Ribosomal RNA large subunit methyltransferase F from Salmonella arizonae (strain ATCC BAA-731 / CDC346-86 / RSK2980).